The primary structure comprises 577 residues: Probable cytochrome c biosynthesis protein (577 aa).

The protein belongs to the CcmF/CycK/Ccl1/NrfE/CcsA family.

Its subcellular location is the mitochondrion. In terms of biological role, could be involved in assembly and maturation of cytochromes c. May play a role in guidance of apocytochromes and heme groups for the covalent linkage introduced by the cytochrome-c-heme lyase. The polypeptide is Probable cytochrome c biosynthesis protein (Oenothera berteroana (Bertero's evening primrose)).